Consider the following 154-residue polypeptide: Endoribonuclease YbeY (154 aa).

Residues His120, His124, and His130 each coordinate Zn(2+).

It belongs to the endoribonuclease YbeY family. Zn(2+) serves as cofactor.

It localises to the cytoplasm. Single strand-specific metallo-endoribonuclease involved in late-stage 70S ribosome quality control and in maturation of the 3' terminus of the 16S rRNA. The protein is Endoribonuclease YbeY of Leptospira biflexa serovar Patoc (strain Patoc 1 / Ames).